The sequence spans 488 residues: Histamine H1 receptor (488 aa).

Residues 1–38 (MSFLPGMTPVTLSNFSWALEDRMLEGNSTTTPTRQLMP) are Extracellular-facing. N-linked (GlcNAc...) asparagine glycosylation is found at Asn-14 and Asn-27. The chain crosses the membrane as a helical span at residues 39 to 59 (LVVVLSSVSLVTVALNLLVLY). Residues 60–73 (AVRSERKLHTVGNL) lie on the Cytoplasmic side of the membrane. The chain crosses the membrane as a helical span at residues 74 to 98 (YIVSLSVADLIVGAVVMPMSILYLH). At 99 to 106 (RSAWILGR) the chain is on the extracellular side. The helical transmembrane segment at 107 to 132 (PLCLFWLSMDYVASTASIFSVFILCI) threads the bilayer. Cysteines 109 and 189 form a disulfide. The histamine site is built by Asp-116 and Thr-121. An important for agonist binding region spans residues 116–121 (DYVAST). Topologically, residues 133–153 (DRYRSVQQPLRYLRYRTKTRA) are cytoplasmic. 2 positions are modified to phosphothreonine: Thr-149 and Thr-151. Residues 154–173 (SATILGAWLLSFLWVIPILG) traverse the membrane as a helical segment. Topologically, residues 174–197 (WHHFMAPTSEPREKKCETDFYDVT) are extracellular. A helical transmembrane segment spans residues 198 to 220 (WFKVMTAIINFYLPTLLMLWFYI). Position 207 (Asn-207) interacts with histamine. Residues 221-417 (RIYKAVRRHC…LNRERKAAKQ (197 aa)) are Cytoplasmic-facing. A Phosphoserine modification is found at Ser-239. Positions 259–274 (RMGKESPWEDPKRCSK) are enriched in basic and acidic residues. The disordered stretch occupies residues 259 to 285 (RMGKESPWEDPKRCSKDASGVHTPMPS). Ser-345, Ser-381, Ser-383, Ser-397, and Ser-399 each carry phosphoserine. Residues 418 to 441 (LGCIMAAFILCWIPYFVFFMVIAF) form a helical membrane-spanning segment. The interval 425–429 (FILCW) is important for agonist binding. Tyr-432 is a binding site for histamine. An intrachain disulfide couples Cys-442 to Cys-445. Topologically, residues 442–447 (CKSCSN) are extracellular. Residues 448–470 (EPVHMFTIWLGYLNSTLNPLIYP) form a helical membrane-spanning segment. At 471 to 488 (LCNENFRKTFKRILRIPP) the chain is on the cytoplasmic side.

The protein belongs to the G-protein coupled receptor 1 family. Post-translationally, phosphorylation at sites in the second and third cytoplasmic loops independently contribute to agonist-induced receptor down-regulation.

The protein resides in the cell membrane. Functionally, G-protein-coupled receptor for histamine, a biogenic amine that functions as an immune modulator and a neurotransmitter. Through the H1 receptor, histamine mediates the contraction of smooth muscles and increases capillary permeability due to contraction of terminal venules. Also mediates neurotransmission in the central nervous system and thereby regulates circadian rhythms, emotional and locomotor activities as well as cognitive functions. The sequence is that of Histamine H1 receptor from Cavia porcellus (Guinea pig).